An 87-amino-acid chain; its full sequence is uncharacterized protein (87 aa).

This is an uncharacterized protein from Dictyostelium discoideum (Social amoeba).